A 516-amino-acid polypeptide reads, in one-letter code: Protein BTN1 (516 aa).

8 consecutive transmembrane segments (helical) span residues 24–44, 57–77, 88–108, 112–132, 146–166, 169–189, 371–391, and 409–429; these read LFAA…IILS, GVVA…WPLL, VGFC…SSSL, LLGI…FLQL, LGAW…IWWL, GLGV…FPIT, PAII…TFFF, and SITI…SGYV.

Belongs to the battenin family.

It localises to the vacuole membrane. Involved in vacuolar transport and vacuole pH homeostasis. Also required for cytokinesis. This chain is Protein BTN1 (BTN1), found in Cryptococcus neoformans var. neoformans serotype D (strain JEC21 / ATCC MYA-565) (Filobasidiella neoformans).